Here is a 149-residue protein sequence, read N- to C-terminus: Large ribosomal subunit protein bL9 (149 aa).

Belongs to the bacterial ribosomal protein bL9 family.

Binds to the 23S rRNA. The chain is Large ribosomal subunit protein bL9 from Amoebophilus asiaticus (strain 5a2).